We begin with the raw amino-acid sequence, 81 residues long: Putative membrane protein insertion efficiency factor (81 aa).

The protein belongs to the UPF0161 family.

It localises to the cell inner membrane. Functionally, could be involved in insertion of integral membrane proteins into the membrane. The polypeptide is Putative membrane protein insertion efficiency factor (Pseudomonas syringae pv. syringae (strain B728a)).